Here is a 270-residue protein sequence, read N- to C-terminus: tRNA pseudouridine synthase A (270 aa).

The Nucleophile role is filled by aspartate 54. Tyrosine 112 contacts substrate.

The protein belongs to the tRNA pseudouridine synthase TruA family. Homodimer.

It carries out the reaction uridine(38/39/40) in tRNA = pseudouridine(38/39/40) in tRNA. In terms of biological role, formation of pseudouridine at positions 38, 39 and 40 in the anticodon stem and loop of transfer RNAs. This is tRNA pseudouridine synthase A from Bordetella bronchiseptica (strain ATCC BAA-588 / NCTC 13252 / RB50) (Alcaligenes bronchisepticus).